Here is a 371-residue protein sequence, read N- to C-terminus: Putative ribonuclease 3 (371 aa).

In terms of domain architecture, RNase III spans 10–136 (AKSVKDKYIP…FLGAVCMAVD (127 aa)).

Belongs to the IIV-6 142R family.

It catalyses the reaction Endonucleolytic cleavage to 5'-phosphomonoester.. Functionally, digests double-stranded RNA. This Frog virus 3 (isolate Goorha) (FV-3) protein is Putative ribonuclease 3.